Consider the following 309-residue polypeptide: Serine/threonine-protein phosphatase 2A catalytic subunit alpha isoform (309 aa).

Mn(2+) is bound by residues D57, H59, D85, and N117. D57, H59, and D85 together coordinate Zn(2+). Fe(3+)-binding residues include D85 and N117. The active-site Proton donor is the H118. Residues H167 and H241 each contribute to the Mn(2+) site. Positions 167 and 241 each coordinate Fe(3+). Residue Y307 is modified to Phosphotyrosine. A Leucine methyl ester modification is found at L309.

This sequence belongs to the PPP phosphatase family. PP-1 subfamily. In terms of assembly, PP2A consists of a common heterodimeric core enzyme, composed of PPP2CA, a 36 kDa catalytic subunit (subunit C), and PPP2R1A, a 65 kDa constant regulatory subunit (PR65 or subunit A), that associates with a variety of regulatory subunits. Proteins that associate with the core dimer include three families of regulatory subunits B (the R2/B/PR55/B55, R3/B''/PR72/PR130/PR59 and R5/B'/B56 families), the 48 kDa variable regulatory subunit, viral proteins, and cell signaling molecules. May indirectly interact with SGOL1, most probably through regulatory B56 subunits. Phosphatase component of the Integrator-PP2A (INTAC) complex, composed of the Integrator core complex and protein phosphatase 2A subunits PPP2CA and PPP2R1A. Requires Mn(2+) as cofactor. The cofactor is Fe(3+). Zn(2+) serves as cofactor. Reversibly methyl esterified on Leu-309 by leucine carboxyl methyltransferase 1 (LCMT1) and protein phosphatase methylesterase 1 (PPME1). Carboxyl methylation influences the affinity of the catalytic subunit for the different regulatory subunits, thereby modulating the PP2A holoenzyme's substrate specificity, enzyme activity and cellular localization. In terms of processing, phosphorylation of either threonine (by autophosphorylation-activated protein kinase) or tyrosine results in inactivation of the phosphatase. Auto-dephosphorylation has been suggested as a mechanism for reactivation.

The protein resides in the cytoplasm. It is found in the nucleus. The protein localises to the chromosome. Its subcellular location is the centromere. It localises to the cytoskeleton. The protein resides in the spindle pole. It carries out the reaction O-phospho-L-seryl-[protein] + H2O = L-seryl-[protein] + phosphate. It catalyses the reaction O-phospho-L-threonyl-[protein] + H2O = L-threonyl-[protein] + phosphate. Inhibited by the interaction between PPP2R2A and ARPP19; this inhibition is enhanced when ARPP19 is phosphorylated. Inhibited by the interaction between PPP2R2A and PABIR1/FAM122A. PP2A is the major phosphatase for microtubule-associated proteins (MAPs). PP2A can modulate the activity of phosphorylase B kinase casein kinase 2, mitogen-stimulated S6 kinase, and MAP-2 kinase. Key mediator of a quality checkpoint during transcription elongation as part of the Integrator-PP2A (INTAC) complex. The INTAC complex drives premature transcription termination of transcripts that are unfavorably configured for transcriptional elongation: within the INTAC complex, PPP2CA catalyzes dephosphorylation of the C-terminal domain (CTD) of Pol II subunit POLR2A/RPB1 and SUPT5H/SPT5, thereby preventing transcriptional elongation. This Gallus gallus (Chicken) protein is Serine/threonine-protein phosphatase 2A catalytic subunit alpha isoform (PPP2CA).